Consider the following 397-residue polypeptide: Phosphoglycerate kinase (397 aa).

Residues 21 to 23, Arg-36, 59 to 62, Arg-119, and Arg-152 contribute to the substrate site; these read DVN and HFGR. Residues Lys-202, Glu-324, and 354 to 357 contribute to the ATP site; that span reads GGDT.

The protein belongs to the phosphoglycerate kinase family. In terms of assembly, monomer.

It is found in the cytoplasm. It carries out the reaction (2R)-3-phosphoglycerate + ATP = (2R)-3-phospho-glyceroyl phosphate + ADP. It participates in carbohydrate degradation; glycolysis; pyruvate from D-glyceraldehyde 3-phosphate: step 2/5. The sequence is that of Phosphoglycerate kinase from Cereibacter sphaeroides (strain ATCC 17029 / ATH 2.4.9) (Rhodobacter sphaeroides).